Here is a 383-residue protein sequence, read N- to C-terminus: Acetylornithine deacetylase (383 aa).

Histidine 80 lines the Zn(2+) pocket. Aspartate 82 is an active-site residue. Aspartate 112 contributes to the Zn(2+) binding site. Glutamate 144 is an active-site residue. Residues glutamate 145, glutamate 169, and histidine 355 each contribute to the Zn(2+) site.

Belongs to the peptidase M20A family. ArgE subfamily. As to quaternary structure, homodimer. The cofactor is Zn(2+). Co(2+) is required as a cofactor. Requires glutathione as cofactor.

The protein localises to the cytoplasm. It carries out the reaction N(2)-acetyl-L-ornithine + H2O = L-ornithine + acetate. It functions in the pathway amino-acid biosynthesis; L-arginine biosynthesis; L-ornithine from N(2)-acetyl-L-ornithine (linear): step 1/1. Functionally, catalyzes the hydrolysis of the amide bond of N(2)-acetylated L-amino acids. Cleaves the acetyl group from N-acetyl-L-ornithine to form L-ornithine, an intermediate in L-arginine biosynthesis pathway, and a branchpoint in the synthesis of polyamines. In Pectobacterium atrosepticum (strain SCRI 1043 / ATCC BAA-672) (Erwinia carotovora subsp. atroseptica), this protein is Acetylornithine deacetylase.